We begin with the raw amino-acid sequence, 324 residues long: Lignin-forming anionic peroxidase (324 aa).

A signal peptide spans 1–22 (MSFLRFVGAILFLVAIFGASNA). Pyrrolidone carboxylic acid is present on Q23. Disulfide bonds link C33-C111, C66-C71, C117-C320, and C196-C228. N-linked (GlcNAc...) asparagine glycosylation occurs at N35. H64 acts as the Proton acceptor in catalysis. 5 residues coordinate Ca(2+): D65, V68, G70, D72, and S74. N150 carries N-linked (GlcNAc...) asparagine glycosylation. P159 lines the substrate pocket. Residue H189 coordinates heme b. T190 contributes to the Ca(2+) binding site. N-linked (GlcNAc...) asparagine glycosylation occurs at N207. 3 residues coordinate Ca(2+): D242, T245, and D250.

This sequence belongs to the peroxidase family. Classical plant (class III) peroxidase subfamily. It depends on Ca(2+) as a cofactor. Heme b serves as cofactor.

It localises to the secreted. It carries out the reaction 2 a phenolic donor + H2O2 = 2 a phenolic radical donor + 2 H2O. Removal of H(2)O(2), oxidation of toxic reductants, biosynthesis and degradation of lignin, suberization, auxin catabolism, response to environmental stresses such as wounding, pathogen attack and oxidative stress. These functions might be dependent on each isozyme/isoform in each plant tissue. Its function is as follows. Plays an integral role in secondary cell wall biosynthesis by the polymerization of cinnamyl alcohols into lignin and by forming rigid cross-links between cellulose, pectin, hydroxy-proline-rich glycoproteins, and lignin. This is Lignin-forming anionic peroxidase from Nicotiana tabacum (Common tobacco).